The following is a 515-amino-acid chain: Envelope glycoprotein (515 aa).

Positions 1–33 are cleaved as a signal peptide; sequence MPKERRSRRRPQPIIRWVSLTLTLLALCRPIQT. Residues 34-435 lie on the Extracellular side of the membrane; the sequence is WRCSLSLGNQ…LGLTAWVRET (402 aa). N-linked (GlcNAc...) asparagine; by host glycosylation is found at asparagine 129 and asparagine 203. Residues 212–215 carry the CXXC motif; sequence CAIC. Cystine bridges form between cysteine 212–cysteine 215, cysteine 212–cysteine 392, and cysteine 384–cysteine 391. Asparagine 230, asparagine 251, asparagine 256, asparagine 271, and asparagine 287 each carry an N-linked (GlcNAc...) asparagine; by host glycan. The segment at 304–324 is fusion peptide; it reads VAALTLGLALSVGLTGINVAV. 2 coiled-coil regions span residues 330–376 and 388–420; these read QRLT…WLYI and NEPC…DWQW. Asparagine 351 carries an N-linked (GlcNAc...) asparagine; by host glycan. An immunosuppression region spans residues 365-381; it reads AQNRRGLDWLYIRLGFQ. A CX6CC motif is present at residues 384–392; that stretch reads CPTINEPCC. Residue asparagine 398 is glycosylated (N-linked (GlcNAc...) asparagine; by host). Residues 436–456 form a helical membrane-spanning segment; the sequence is IHSVLSLFLLALFLLFLAPCL. Residue cysteine 455 is the site of S-palmitoyl cysteine; by host attachment. Over 457–515 the chain is Cytoplasmic; that stretch reads IKCLTSRLLKLLRQAPHFPEISLTPKPDSDYQALLPSAPEIYSHLSPVKPDYINLRPCP.

In terms of assembly, the mature envelope protein (Env) consists of a trimer of SU-TM heterodimers attached by a labile interchain disulfide bond. Post-translationally, specific enzymatic cleavages in vivo yield mature proteins. Envelope glycoproteins are synthesized as an inactive precursor that is N-glycosylated and processed likely by host cell furin or by a furin-like protease in the Golgi to yield the mature SU and TM proteins. The cleavage site between SU and TM requires the minimal sequence [KR]-X-[KR]-R. The CXXC motif is highly conserved across a broad range of retroviral envelope proteins. It is thought to participate in the formation of a labile disulfide bond possibly with the CX6CC motif present in the transmembrane protein. Isomerization of the intersubunit disulfide bond to an SU intrachain disulfide bond is thought to occur upon receptor recognition in order to allow membrane fusion. In terms of processing, the transmembrane protein is palmitoylated.

The protein localises to the virion membrane. The protein resides in the host cell membrane. The surface protein (SU) attaches the virus to the host cell by binding to its receptor. This interaction triggers the refolding of the transmembrane protein (TM) and is thought to activate its fusogenic potential by unmasking its fusion peptide. Fusion occurs at the host cell plasma membrane. Functionally, the transmembrane protein (TM) acts as a class I viral fusion protein. Under the current model, the protein has at least 3 conformational states: pre-fusion native state, pre-hairpin intermediate state, and post-fusion hairpin state. During viral and target cell membrane fusion, the coiled coil regions (heptad repeats) assume a trimer-of-hairpins structure, positioning the fusion peptide in close proximity to the C-terminal region of the ectodomain. The formation of this structure appears to drive apposition and subsequent fusion of viral and target cell membranes. Membranes fusion leads to delivery of the nucleocapsid into the cytoplasm. The polypeptide is Envelope glycoprotein (env) (Bos taurus (Bovine)).